Reading from the N-terminus, the 957-residue chain is UvrABC system protein A (957 aa).

Position 33-40 (33-40 (GLSGSGKS)) interacts with ATP. The segment at 252–279 (CPHCGFSIGELEPRLFSFNSPFGACPTC) adopts a C4-type zinc-finger fold. 2 consecutive ABC transporter domains span residues 309 to 587 (WTPI…PNSL) and 607 to 935 (PDGR…RYLK). 639–646 (GVSGSGKS) is an ATP binding site. A C4-type zinc finger spans residues 738 to 764 (CEACRGDGIIKIEMHFLPDVYVPCEVC).

This sequence belongs to the ABC transporter superfamily. UvrA family. Forms a heterotetramer with UvrB during the search for lesions.

It localises to the cytoplasm. In terms of biological role, the UvrABC repair system catalyzes the recognition and processing of DNA lesions. UvrA is an ATPase and a DNA-binding protein. A damage recognition complex composed of 2 UvrA and 2 UvrB subunits scans DNA for abnormalities. When the presence of a lesion has been verified by UvrB, the UvrA molecules dissociate. This chain is UvrABC system protein A, found in Bacillus subtilis (strain 168).